The sequence spans 339 residues: MAKRHLTRRQSWRIEKIQEERAARAARRESRAVDELEGGDLGPEQTGQVIAHFGVQVEVESADGQVSRCHLRANLPALVTGDQVVWRAGNQGIGVIVAQLPRRSELCRPDMRGLLKPVAANVDRIVIVFAPRPEPHANLIDRYLIAAEHAGIQPLLLLNKADLVDESNAEGIDALLNVYRTLGYPLIEVSAFNGLAMDELRGALDGHVSVFVGQSGVGKSSLVNALLPGVDTRVGDLSTVTGKGTHTTTTARLFHFPGGGDLIDSPGIREFGLGHVSRDDVEAGFIEFRDLLGHCRFRDCKHDREPGCALLQALEDGRIMPQRMASYRHILASMPETDY.

In terms of domain architecture, CP-type G spans M111–F271. GTP contacts are provided by residues N159–D162 and G213–S221. Zn(2+) is bound by residues C295, C300, H302, and C308.

Belongs to the TRAFAC class YlqF/YawG GTPase family. RsgA subfamily. In terms of assembly, monomer. Associates with 30S ribosomal subunit, binds 16S rRNA. The cofactor is Zn(2+).

Its subcellular location is the cytoplasm. Its function is as follows. One of several proteins that assist in the late maturation steps of the functional core of the 30S ribosomal subunit. Helps release RbfA from mature subunits. May play a role in the assembly of ribosomal proteins into the subunit. Circularly permuted GTPase that catalyzes slow GTP hydrolysis, GTPase activity is stimulated by the 30S ribosomal subunit. This chain is Small ribosomal subunit biogenesis GTPase RsgA, found in Pseudomonas aeruginosa (strain LESB58).